A 219-amino-acid chain; its full sequence is Probable nicotinate-nucleotide adenylyltransferase (219 aa).

It belongs to the NadD family.

The catalysed reaction is nicotinate beta-D-ribonucleotide + ATP + H(+) = deamido-NAD(+) + diphosphate. Its pathway is cofactor biosynthesis; NAD(+) biosynthesis; deamido-NAD(+) from nicotinate D-ribonucleotide: step 1/1. Its function is as follows. Catalyzes the reversible adenylation of nicotinate mononucleotide (NaMN) to nicotinic acid adenine dinucleotide (NaAD). The sequence is that of Probable nicotinate-nucleotide adenylyltransferase from Pseudomonas putida (strain W619).